Consider the following 371-residue polypeptide: Cytochrome b (371 aa).

4 consecutive transmembrane segments (helical) span residues 25–45 (FGSL…FLAI), 69–90 (WIMQ…YTHI), 105–125 (WLSG…GYVL), and 170–190 (FFAL…IHII). Residues His75 and His89 each coordinate heme b. The heme b site is built by His174 and His188. Position 193 (His193) interacts with a ubiquinone. 4 helical membrane-spanning segments follow: residues 218–238 (YKDM…MTFA), 280–300 (LGGT…PFTH), 312–332 (LTQI…WTAT), and 339–358 (FIYI…IMNP).

This sequence belongs to the cytochrome b family. As to quaternary structure, the cytochrome bc1 complex contains 3 respiratory subunits (MT-CYB, CYC1 and UQCRFS1), 2 core proteins (UQCRC1 and UQCRC2) and probably 6 low-molecular weight proteins. Heme b is required as a cofactor.

The protein resides in the mitochondrion inner membrane. Its function is as follows. Component of the ubiquinol-cytochrome c reductase complex (complex III or cytochrome b-c1 complex) that is part of the mitochondrial respiratory chain. The b-c1 complex mediates electron transfer from ubiquinol to cytochrome c. Contributes to the generation of a proton gradient across the mitochondrial membrane that is then used for ATP synthesis. The chain is Cytochrome b (MT-CYB) from Micruroides euryxanthus (Sonoran coral snake).